Reading from the N-terminus, the 239-residue chain is Phosphoglycolate phosphatase (239 aa).

Asp9 (nucleophile) is an active-site residue. The Mg(2+) site is built by Asp9 and Asp11. Lys157 is a binding site for substrate. Positions 180 and 184 each coordinate Mg(2+).

This sequence belongs to the archaeal SPP-like hydrolase family. It depends on Mg(2+) as a cofactor.

The enzyme catalyses 2-phosphoglycolate + H2O = glycolate + phosphate. Catalyzes the dephosphorylation of 2-phosphoglycolate. The polypeptide is Phosphoglycolate phosphatase (Thermococcus kodakarensis (strain ATCC BAA-918 / JCM 12380 / KOD1) (Pyrococcus kodakaraensis (strain KOD1))).